We begin with the raw amino-acid sequence, 356 residues long: Alanine racemase (356 aa).

Lys-35 acts as the Proton acceptor; specific for D-alanine in catalysis. An N6-(pyridoxal phosphate)lysine modification is found at Lys-35. Residue Arg-130 participates in substrate binding. The active-site Proton acceptor; specific for L-alanine is the Tyr-253. Met-301 lines the substrate pocket.

Belongs to the alanine racemase family. Pyridoxal 5'-phosphate serves as cofactor.

The enzyme catalyses L-alanine = D-alanine. Its pathway is amino-acid biosynthesis; D-alanine biosynthesis; D-alanine from L-alanine: step 1/1. Its function is as follows. Catalyzes the interconversion of L-alanine and D-alanine. May also act on other amino acids. In Erwinia tasmaniensis (strain DSM 17950 / CFBP 7177 / CIP 109463 / NCPPB 4357 / Et1/99), this protein is Alanine racemase (alr).